Consider the following 373-residue polypeptide: Sterol-4-alpha-carboxylate 3-dehydrogenase, decarboxylating (373 aa).

Position 1 is an N-acetylmethionine (M1). The residue at position 22 (T22) is a Phosphothreonine. Y172 (proton acceptor) is an active-site residue. An NAD(+)-binding site is contributed by K176. The chain crosses the membrane as a helical span at residues 298–318; that stretch reads WVAYYLALLLSLLVMVISPVI. Positions 370 to 373 match the Prevents secretion from ER motif; the sequence is RRVK.

It belongs to the 3-beta-HSD family. As to quaternary structure, homodimer. As to expression, brain, heart, liver, lung, kidney, skin and placenta.

It is found in the endoplasmic reticulum membrane. It localises to the lipid droplet. It carries out the reaction a 3beta-hydroxysteroid-4alpha-carboxylate + NADP(+) = a 3-oxosteroid + CO2 + NADPH. The catalysed reaction is a 3beta-hydroxysteroid-4alpha-carboxylate + NAD(+) = a 3-oxosteroid + CO2 + NADH. It catalyses the reaction 4alpha-carboxyzymosterol + NADP(+) = zymosterone + CO2 + NADPH. The enzyme catalyses 4alpha-carboxy-4beta-methyl-5alpha-cholest-8-en-3beta-ol + NADP(+) = 4alpha-methyl-5alpha-cholest-8-en-3-one + CO2 + NADPH. It carries out the reaction 4alpha-carboxy-5alpha-cholest-8-ene-3beta-ol + NADP(+) = 5alpha-cholest-8-en-3-one + CO2 + NADPH. The catalysed reaction is 4beta-methylzymosterol-4alpha-carboxylate + NADP(+) = 3-dehydro-4-methylzymosterol + CO2 + NADPH. It catalyses the reaction 4beta-methylzymosterol-4alpha-carboxylate + NAD(+) = 3-dehydro-4-methylzymosterol + CO2 + NADH. The enzyme catalyses 4alpha-carboxy-5alpha-cholest-8-ene-3beta-ol + NAD(+) = 5alpha-cholest-8-en-3-one + CO2 + NADH. It carries out the reaction 4alpha-carboxy-4beta-methyl-5alpha-cholest-8-en-3beta-ol + NAD(+) = 4alpha-methyl-5alpha-cholest-8-en-3-one + CO2 + NADH. The catalysed reaction is 4alpha-carboxyzymosterol + NAD(+) = zymosterone + CO2 + NADH. Its pathway is steroid biosynthesis; zymosterol biosynthesis; zymosterol from lanosterol: step 4/6. Functionally, catalyzes the NAD(P)(+)-dependent oxidative decarboxylation of the C4 methyl groups of 4-alpha-carboxysterols in post-squalene cholesterol biosynthesis. Also plays a role in the regulation of the endocytic trafficking of EGFR. This chain is Sterol-4-alpha-carboxylate 3-dehydrogenase, decarboxylating (NSDHL), found in Homo sapiens (Human).